Here is a 31-residue protein sequence, read N- to C-terminus: Cytochrome b6-f complex subunit 6 (31 aa).

Residues I4–G24 traverse the membrane as a helical segment.

The protein belongs to the PetL family. As to quaternary structure, the 4 large subunits of the cytochrome b6-f complex are cytochrome b6, subunit IV (17 kDa polypeptide, PetD), cytochrome f and the Rieske protein, while the 4 small subunits are PetG, PetL, PetM and PetN. The complex functions as a dimer.

It localises to the plastid. Its subcellular location is the chloroplast thylakoid membrane. In terms of biological role, component of the cytochrome b6-f complex, which mediates electron transfer between photosystem II (PSII) and photosystem I (PSI), cyclic electron flow around PSI, and state transitions. PetL is important for photoautotrophic growth as well as for electron transfer efficiency and stability of the cytochrome b6-f complex. This is Cytochrome b6-f complex subunit 6 from Gossypium hirsutum (Upland cotton).